A 108-amino-acid polypeptide reads, in one-letter code: Iron-sulfur cluster assembly protein CyaY (108 aa).

Belongs to the frataxin family.

Functionally, involved in iron-sulfur (Fe-S) cluster assembly. May act as a regulator of Fe-S biogenesis. The protein is Iron-sulfur cluster assembly protein CyaY of Pseudoalteromonas atlantica (strain T6c / ATCC BAA-1087).